The following is a 357-amino-acid chain: Hemolysin VllY (357 aa).

2 VOC domains span residues 12-132 and 162-313; these read GFEF…FVDR and EIDH…IFTQ. Positions 165, 243, and 322 each coordinate Fe cation.

The protein belongs to the 4HPPD family. It depends on Fe cation as a cofactor.

The protein is Hemolysin VllY (vllY) of Vibrio vulnificus (strain CMCP6).